The following is a 515-amino-acid chain: Envelope glycoprotein (515 aa).

The N-terminal stretch at 1–33 (MPKERRSRRRPEPIIRWVSLTLTLLALCQPIQT) is a signal peptide. Over 34–435 (WRCSLSLGNQ…LGLTAWVRET (402 aa)) the chain is Extracellular. Asn129 and Asn203 each carry an N-linked (GlcNAc...) asparagine; by host glycan. The CXXC signature appears at 212-215 (CAIC). 3 cysteine pairs are disulfide-bonded: Cys212–Cys215, Cys212–Cys392, and Cys384–Cys391. N-linked (GlcNAc...) asparagine; by host glycans are attached at residues Asn230, Asn251, Asn256, Asn271, and Asn287. The tract at residues 304 to 324 (VAALTLGLALSVGLTGIKVAV) is fusion peptide. Coiled coils occupy residues 330-376 (QRLT…WLYI) and 388-420 (NEPCCFLRIQNDSIIRLGDLQPLSQRVSTDWQW). N-linked (GlcNAc...) asparagine; by host glycosylation is present at Asn351. The segment at 365–381 (AQNRRGLDWLYIRLGFQ) is immunosuppression. Residues 384 to 392 (CPTINEPCC) carry the CX6CC motif. N-linked (GlcNAc...) asparagine; by host glycosylation occurs at Asn398. The chain crosses the membrane as a helical span at residues 436-456 (IHSVLSLFLLALLLLFLAPCL). Cys455 carries the S-palmitoyl cysteine; by host lipid modification. Over 457 to 515 (IKCLTSRLSKLLRQAPHFPEISFPPKPDSDYQALLPSAPEIYSHLSPTKPDYINLRPCP) the chain is Cytoplasmic.

In terms of assembly, the mature envelope protein (Env) consists of a trimer of SU-TM heterodimers attached by a labile interchain disulfide bond. Post-translationally, specific enzymatic cleavages in vivo yield mature proteins. Envelope glycoproteins are synthesized as an inactive precursor that is N-glycosylated and processed likely by host cell furin or by a furin-like protease in the Golgi to yield the mature SU and TM proteins. The cleavage site between SU and TM requires the minimal sequence [KR]-X-[KR]-R. The CXXC motif is highly conserved across a broad range of retroviral envelope proteins. It is thought to participate in the formation of a labile disulfide bond possibly with the CX6CC motif present in the transmembrane protein. Isomerization of the intersubunit disulfide bond to an SU intrachain disulfide bond is thought to occur upon receptor recognition in order to allow membrane fusion. In terms of processing, the transmembrane protein is palmitoylated.

Its subcellular location is the virion membrane. The protein localises to the host cell membrane. Its function is as follows. The surface protein (SU) attaches the virus to the host cell by binding to its receptor. This interaction triggers the refolding of the transmembrane protein (TM) and is thought to activate its fusogenic potential by unmasking its fusion peptide. Fusion occurs at the host cell plasma membrane. The transmembrane protein (TM) acts as a class I viral fusion protein. Under the current model, the protein has at least 3 conformational states: pre-fusion native state, pre-hairpin intermediate state, and post-fusion hairpin state. During viral and target cell membrane fusion, the coiled coil regions (heptad repeats) assume a trimer-of-hairpins structure, positioning the fusion peptide in close proximity to the C-terminal region of the ectodomain. The formation of this structure appears to drive apposition and subsequent fusion of viral and target cell membranes. Membranes fusion leads to delivery of the nucleocapsid into the cytoplasm. The sequence is that of Envelope glycoprotein (env) from Bovine leukemia virus (isolate Australian) (BLV).